We begin with the raw amino-acid sequence, 248 residues long: Probable cyclic nucleotide phosphodiesterase CBUA0032 (248 aa).

7 residues coordinate Fe cation: Asp-13, His-15, Asp-52, Asn-82, His-152, His-191, and His-193. Residues His-15, Asp-52, and 82-83 contribute to the AMP site; that span reads NH. AMP is bound at residue His-193.

It belongs to the cyclic nucleotide phosphodiesterase class-III family. Requires Fe(2+) as cofactor.

This is Probable cyclic nucleotide phosphodiesterase CBUA0032 from Coxiella burnetii (strain RSA 493 / Nine Mile phase I).